Reading from the N-terminus, the 316-residue chain is Very-long-chain 3-oxooacyl-coA reductase let-767 (316 aa).

NADP(+) contacts are provided by residues 47-76 (ASWA…NVLL) and aspartate 106. Substrate is bound at residue serine 189. Tyrosine 202 acts as the Proton acceptor in catalysis. Position 206 (lysine 206) interacts with NADP(+).

This sequence belongs to the short-chain dehydrogenases/reductases (SDR) family. 17-beta-HSD 3 subfamily. Expressed in the gut of larva and adult.

The enzyme catalyses a very-long-chain (3R)-3-hydroxyacyl-CoA + NADP(+) = a very-long-chain 3-oxoacyl-CoA + NADPH + H(+). It catalyses the reaction (omega-1)-methyl-(3R)-hydroxy-fatty acyl-CoA + NADP(+) = (omega-1)-methyl-3-oxo-fatty acyl-CoA + NADPH + H(+). It carries out the reaction a 17beta-hydroxy steroid + NADP(+) = a 17-oxo steroid + NADPH + H(+). It functions in the pathway lipid metabolism; fatty acid biosynthesis. Its function is as follows. Required for branched-chain fatty acid synthesis (such as (omega-1)-methyl-fatty acids). Catalyzes the reduction of the 3-keto-fatty acyl-CoA intermediate that is formed in each cycle of fatty acid elongation. Very long-chain fatty acids (VLCFAs) serve as precursors for ceramide and sphingolipids. Involved in hormone production as it metabolizes 4-androstendione (androst-4-ene-3,17-dione) into testosterone and estrone into estradiol (17beta-estradiol) in vitro, but the physiological steroid substrate is unknown. In Caenorhabditis elegans, this protein is Very-long-chain 3-oxooacyl-coA reductase let-767 (let-767).